The primary structure comprises 86 residues: Small ribosomal subunit protein bS20 (86 aa).

Polar residues predominate over residues 1–11 (MANIKSQIKRN). A disordered region spans residues 1–20 (MANIKSQIKRNLTNEKRHQA).

This sequence belongs to the bacterial ribosomal protein bS20 family.

Binds directly to 16S ribosomal RNA. This chain is Small ribosomal subunit protein bS20, found in Acholeplasma laidlawii (strain PG-8A).